A 191-amino-acid chain; its full sequence is MSAVLIAVLALLALCLLGGAILGFAAVRFRVEGDPIAEQINALLPQTQCGQCGYPGCKPYAEAIAGGDKINKCPPGGEATIQALADLLDVEPEPLDAEGGEKPQMVAYIREAECIGCTKCIQACPVDAIVGAARQMHTVIISECTGCDLCVEPCPVDCIDMIEVGSNLQSWKWNRPLAPGQLIATDREQAA.

A hydrophobic region spans residues 1 to 26; it reads MSAVLIAVLALLALCLLGGAILGFAA. One can recognise a 4Fe-4S domain in the interval 32–90; that stretch reads EGDPIAEQINALLPQTQCGQCGYPGCKPYAEAIAGGDKINKCPPGGEATIQALADLLDV. [4Fe-4S] cluster-binding residues include C49, C52, C57, C73, C114, C117, C120, C124, C144, C147, C150, and C154. 4Fe-4S ferredoxin-type domains lie at 105-134 and 135-164; these read MVAY…GAAR and QMHT…MIEV.

Belongs to the 4Fe4S bacterial-type ferredoxin family. RnfB subfamily. In terms of assembly, the complex is composed of six subunits: RnfA, RnfB, RnfC, RnfD, RnfE and RnfG. [4Fe-4S] cluster serves as cofactor.

It localises to the cell inner membrane. In terms of biological role, part of a membrane-bound complex that couples electron transfer with translocation of ions across the membrane. The chain is Ion-translocating oxidoreductase complex subunit B from Stutzerimonas stutzeri (strain A1501) (Pseudomonas stutzeri).